The chain runs to 393 residues: Elongation factor Tu (393 aa).

In terms of domain architecture, tr-type G spans 10–203 (KPHVNIGTIG…AVDSYIPQPV (194 aa)). The segment at 19-26 (GHVDHGKT) is G1. Position 19 to 26 (19 to 26 (GHVDHGKT)) interacts with GTP. T26 serves as a coordination point for Mg(2+). The segment at 60–64 (GITIS) is G2. The segment at 81–84 (DCPG) is G3. Residues 81 to 85 (DCPGH) and 136 to 139 (NKVD) each bind GTP. Positions 136–139 (NKVD) are G4. Residues 173–175 (SAL) form a G5 region.

This sequence belongs to the TRAFAC class translation factor GTPase superfamily. Classic translation factor GTPase family. EF-Tu/EF-1A subfamily. Monomer.

It is found in the cytoplasm. The enzyme catalyses GTP + H2O = GDP + phosphate + H(+). GTP hydrolase that promotes the GTP-dependent binding of aminoacyl-tRNA to the A-site of ribosomes during protein biosynthesis. The polypeptide is Elongation factor Tu (Chlorobaculum tepidum (strain ATCC 49652 / DSM 12025 / NBRC 103806 / TLS) (Chlorobium tepidum)).